A 513-amino-acid chain; its full sequence is Putative ribose/galactose/methyl galactoside import ATP-binding protein 2 (513 aa).

2 ABC transporter domains span residues 24-260 and 270-510; these read LTAE…VGRE and VPIG…VMEL. 56–63 contributes to the ATP binding site; it reads GENGAGKS.

This sequence belongs to the ABC transporter superfamily. Carbohydrate importer 2 (CUT2) (TC 3.A.1.2) family.

It is found in the cell inner membrane. The catalysed reaction is D-ribose(out) + ATP + H2O = D-ribose(in) + ADP + phosphate + H(+). It catalyses the reaction D-galactose(out) + ATP + H2O = D-galactose(in) + ADP + phosphate + H(+). In terms of biological role, part of an ABC transporter complex involved in carbohydrate import. Could be involved in ribose, galactose and/or methyl galactoside import. Responsible for energy coupling to the transport system. The chain is Putative ribose/galactose/methyl galactoside import ATP-binding protein 2 from Rhizobium meliloti (strain 1021) (Ensifer meliloti).